Consider the following 355-residue polypeptide: Probable nitronate monooxygenase (355 aa).

Residues asparagine 71, glutamine 175, glycine 180, glycine 218, and glutamine 237–threonine 240 each bind FMN.

This sequence belongs to the nitronate monooxygenase family. NMO class I subfamily. It depends on FMN as a cofactor.

The catalysed reaction is 3 propionate 3-nitronate + 3 O2 + H2O = 3 3-oxopropanoate + 2 nitrate + nitrite + H2O2 + 3 H(+). In terms of biological role, nitronate monooxygenase that uses molecular oxygen to catalyze the oxidative denitrification of alkyl nitronates. Acts on propionate 3-nitronate (P3N), the presumed physiological substrate. Probably functions in the detoxification of P3N, a metabolic poison produced by plants and fungi as a defense mechanism. This chain is Probable nitronate monooxygenase, found in Staphylococcus aureus (strain USA300).